A 267-amino-acid chain; its full sequence is L-aspartate dehydrogenase (267 aa).

Positions 124 and 190 each coordinate NAD(+). H218 is an active-site residue.

This sequence belongs to the L-aspartate dehydrogenase family.

It carries out the reaction L-aspartate + NADP(+) + H2O = oxaloacetate + NH4(+) + NADPH + H(+). The catalysed reaction is L-aspartate + NAD(+) + H2O = oxaloacetate + NH4(+) + NADH + H(+). Its pathway is cofactor biosynthesis; NAD(+) biosynthesis; iminoaspartate from L-aspartate (dehydrogenase route): step 1/1. In terms of biological role, specifically catalyzes the NAD or NADP-dependent dehydrogenation of L-aspartate to iminoaspartate. This chain is L-aspartate dehydrogenase, found in Methanococcus maripaludis (strain C6 / ATCC BAA-1332).